Reading from the N-terminus, the 304-residue chain is Recombination-associated protein RdgC (304 aa).

This sequence belongs to the RdgC family.

The protein resides in the cytoplasm. It is found in the nucleoid. May be involved in recombination. The chain is Recombination-associated protein RdgC from Shewanella sp. (strain W3-18-1).